The chain runs to 102 residues: Large ribosomal subunit protein bL21 (102 aa).

This sequence belongs to the bacterial ribosomal protein bL21 family. As to quaternary structure, part of the 50S ribosomal subunit. Contacts protein L20.

This protein binds to 23S rRNA in the presence of protein L20. The polypeptide is Large ribosomal subunit protein bL21 (Staphylococcus haemolyticus (strain JCSC1435)).